A 264-amino-acid chain; its full sequence is S-adenosylmethionine decarboxylase proenzyme (264 aa).

Ser-112 functions as the Schiff-base intermediate with substrate; via pyruvic acid in the catalytic mechanism. Ser-112 carries the pyruvic acid (Ser); by autocatalysis modification. His-117 acts as the Proton acceptor; for processing activity in catalysis. Cys-140 (proton donor; for catalytic activity) is an active-site residue.

This sequence belongs to the prokaryotic AdoMetDC family. Type 2 subfamily. In terms of assembly, heterooctamer of four alpha and four beta chains arranged as a tetramer of alpha/beta heterodimers. Requires pyruvate as cofactor. Is synthesized initially as an inactive proenzyme. Formation of the active enzyme involves a self-maturation process in which the active site pyruvoyl group is generated from an internal serine residue via an autocatalytic post-translational modification. Two non-identical subunits are generated from the proenzyme in this reaction, and the pyruvate is formed at the N-terminus of the alpha chain, which is derived from the carboxyl end of the proenzyme. The post-translation cleavage follows an unusual pathway, termed non-hydrolytic serinolysis, in which the side chain hydroxyl group of the serine supplies its oxygen atom to form the C-terminus of the beta chain, while the remainder of the serine residue undergoes an oxidative deamination to produce ammonia and the pyruvoyl group blocking the N-terminus of the alpha chain.

The enzyme catalyses S-adenosyl-L-methionine + H(+) = S-adenosyl 3-(methylsulfanyl)propylamine + CO2. The protein operates within amine and polyamine biosynthesis; S-adenosylmethioninamine biosynthesis; S-adenosylmethioninamine from S-adenosyl-L-methionine: step 1/1. Catalyzes the decarboxylation of S-adenosylmethionine to S-adenosylmethioninamine (dcAdoMet), the propylamine donor required for the synthesis of the polyamines spermine and spermidine from the diamine putrescine. This Escherichia coli O45:K1 (strain S88 / ExPEC) protein is S-adenosylmethionine decarboxylase proenzyme.